A 526-amino-acid polypeptide reads, in one-letter code: Probable inorganic phosphate transporter 1-3 (526 aa).

Residues 1 to 21 (MADGQLKVLTTLDHARTQWYH) lie on the Cytoplasmic side of the membrane. Residues 22–42 (FMAIVIAGMGFFTDAYDLFCI) traverse the membrane as a helical segment. At 43 to 70 (SLVSKLLGRIYYTDLAGDNPGSLPPNVS) the chain is on the extracellular side. Residues 71–91 (AAVNGVALCGTLAGQLFFGWL) form a helical membrane-spanning segment. The Cytoplasmic segment spans residues 92–99 (GDKLGRKS). A helical transmembrane segment spans residues 100–120 (VYGFTLVLMVVCSVASGLSFG). The Extracellular segment spans residues 121–124 (RTAK). Residues 125–145 (GVVATLCFFRFWLGFGIGGDY) traverse the membrane as a helical segment. Over 146–163 (PLSATIMSEYANKRTRGA) the chain is Cytoplasmic. A helical membrane pass occupies residues 164-184 (FIAAVFAMQGFGILFGAIVAL). Residues 185 to 211 (VVSAGFRNAYPAPSYADGRAASLVPEA) lie on the Extracellular side of the membrane. The chain crosses the membrane as a helical span at residues 212 to 232 (DYVWRIILMFGTVPAALTYYW). Residues 233 to 294 (RMKMPETARY…GLFSRQFVRR (62 aa)) lie on the Cytoplasmic side of the membrane. A helical membrane pass occupies residues 295-315 (HGVHLVATTSTWFLLDIAFYS). The Extracellular segment spans residues 316 to 349 (QNLFQKDIFSKVGWIPPARTMNAVEEVFRIARAQ). Residues 350-370 (ALIALCGTIPGYWFTVAFIDV) form a helical membrane-spanning segment. Topologically, residues 371-373 (AGR) are cytoplasmic. The chain crosses the membrane as a helical span at residues 374 to 394 (FAIQLMGFAMMTVFMLGLAAP). At 395 to 407 (YHHWTTPGNHTGF) the chain is on the extracellular side. The helical transmembrane segment at 408–428 (VVMYGFTFFFANFGPNATTFI) threads the bilayer. The Cytoplasmic segment spans residues 429–444 (VPAEIYPARLRSTCHG). The helical transmembrane segment at 445–465 (ISAAAGKAGAIVGAFGFLYAA) threads the bilayer. At 466 to 483 (QDPHKPEAGYKPGIGIRN) the chain is on the extracellular side. Residues 484-504 (ALFVLAGTNFLGMLMTLLVPE) traverse the membrane as a helical segment. The Cytoplasmic segment spans residues 505–526 (SKGMSLEEVSKENVADDEEATA).

The protein belongs to the major facilitator superfamily. Phosphate:H(+) symporter (TC 2.A.1.9) family. As to expression, expressed at low levels in roots.

The protein localises to the membrane. Functionally, high-affinity transporter for external inorganic phosphate. The protein is Probable inorganic phosphate transporter 1-3 (PHT1-3) of Oryza sativa subsp. japonica (Rice).